We begin with the raw amino-acid sequence, 580 residues long: Multidrug resistance-like ATP-binding protein MdlB (580 aa).

One can recognise an ABC transmembrane type-1 domain in the interval 25 to 310 (LILAFIFLLS…ITIQQSVLQQ (286 aa)). Transmembrane regions (helical) follow at residues 26-46 (ILAF…PILI), 61-81 (LLII…SVFL), 150-170 (IILI…MALV), 173-193 (FILP…TPLL), 247-267 (LDGF…LCNF), and 268-288 (MFLF…YAFI). An ABC transporter domain is found at 341-575 (INIQNVSFYH…KSCYYKMYKF (235 aa)). An ATP-binding site is contributed by 375 to 382 (GHTGSGKS).

It belongs to the ABC transporter superfamily. Drug exporter-2 (TC 3.A.1.117) family.

It localises to the cell membrane. It carries out the reaction ATP + H2O + xenobioticSide 1 = ADP + phosphate + xenobioticSide 2.. This chain is Multidrug resistance-like ATP-binding protein MdlB (mdlB), found in Buchnera aphidicola subsp. Acyrthosiphon pisum (strain APS) (Acyrthosiphon pisum symbiotic bacterium).